A 359-amino-acid polypeptide reads, in one-letter code: Quinolinate synthase (359 aa).

Residues His81 and Ser99 each contribute to the iminosuccinate site. Residue Cys144 participates in [4Fe-4S] cluster binding. Residues 170–172 (YVN) and Ser187 each bind iminosuccinate. Position 229 (Cys229) interacts with [4Fe-4S] cluster. Iminosuccinate-binding positions include 255–257 (HPE) and Thr272. Cys315 is a [4Fe-4S] cluster binding site.

The protein belongs to the quinolinate synthase family. Type 2 subfamily. [4Fe-4S] cluster serves as cofactor.

Its subcellular location is the cytoplasm. It catalyses the reaction iminosuccinate + dihydroxyacetone phosphate = quinolinate + phosphate + 2 H2O + H(+). It functions in the pathway cofactor biosynthesis; NAD(+) biosynthesis; quinolinate from iminoaspartate: step 1/1. In terms of biological role, catalyzes the condensation of iminoaspartate with dihydroxyacetone phosphate to form quinolinate. In Sinorhizobium fredii (strain NBRC 101917 / NGR234), this protein is Quinolinate synthase.